We begin with the raw amino-acid sequence, 96 residues long: Copper-sensing transcriptional repressor RicR (96 aa).

The residue at position 2 (T2) is an N-acetylthreonine. The Cu cation site is built by C38, H63, and C67.

This sequence belongs to the CsoR family.

It localises to the cytoplasm. Its function is as follows. Under low copper conditions, represses the expression of lpqS, Rv2963, mymT, socA, socB, mmcO and its own expression. In the presence of copper, RicR dissociates from DNA, leading to the expression of the target genes. Members of the RicR regulon are important for copper resistance during infections and full virulence in a mouse model of infection. This is Copper-sensing transcriptional repressor RicR from Mycobacterium tuberculosis (strain ATCC 25618 / H37Rv).